The following is a 355-amino-acid chain: Alanine racemase (355 aa).

The Proton acceptor; specific for D-alanine role is filled by Lys34. N6-(pyridoxal phosphate)lysine is present on Lys34. Arg133 contacts substrate. Tyr249 (proton acceptor; specific for L-alanine) is an active-site residue. Substrate is bound at residue Met297.

The protein belongs to the alanine racemase family. Requires pyridoxal 5'-phosphate as cofactor.

It catalyses the reaction L-alanine = D-alanine. It participates in amino-acid biosynthesis; D-alanine biosynthesis; D-alanine from L-alanine: step 1/1. Functionally, catalyzes the interconversion of L-alanine and D-alanine. May also act on other amino acids. The polypeptide is Alanine racemase (alr) (Rickettsia rickettsii (strain Sheila Smith)).